Reading from the N-terminus, the 542-residue chain is MFS thioclapurine efflux transporter tcpA (542 aa).

Over residues 1 to 10 (MATVGTEEKN) the composition is skewed to basic and acidic residues. Residues 1–24 (MATVGTEEKNPIGSASNTAEPNVT) are disordered. Residues 13–24 (GSASNTAEPNVT) show a composition bias toward polar residues. The N-linked (GlcNAc...) asparagine glycan is linked to Asn22. Transmembrane regions (helical) follow at residues 32-52 (SGFK…LCGL), 75-97 (GWYT…KLYT), and 103-123 (MILL…AAAP). Asn124 carries an N-linked (GlcNAc...) asparagine glycan. 6 helical membrane-spanning segments follow: residues 133 to 153 (AIAG…LVHA), 161 to 181 (ALLG…PFIG), 193 to 213 (CFII…FFVF), 234 to 254 (IPEI…LQWG), 265 to 285 (IIAL…LQVL), and 307 to 327 (IFAL…PIYF). N-linked (GlcNAc...) asparagine glycosylation occurs at Asn332. Residues 339 to 359 (GVNVMPLILGFLVMSIISGVI) form a helical membrane-spanning segment. N-linked (GlcNAc...) asparagine glycosylation occurs at Asn361. The next 4 helical transmembrane spans lie at 370–390 (MFLC…FDVG), 396–416 (WIGY…QPIV), 427–447 (VPFG…IFVA), and 500–520 (VLGQ…LGSL).

Belongs to the major facilitator superfamily.

It is found in the cell membrane. Its function is as follows. MFS efflux transporter probably involved in thioclapurine export. The chain is MFS thioclapurine efflux transporter tcpA from Claviceps purpurea (strain 20.1) (Ergot fungus).